We begin with the raw amino-acid sequence, 274 residues long: GCN5-related N-acetyltransferase 7, chloroplastic (274 aa).

A chloroplast-targeting transit peptide spans 1–65; the sequence is MAFLCSSLPS…STFVISESVS (65 aa). The region spanning 75 to 267 is the N-acetyltransferase domain; sequence LRVRTFNELN…QRLLLWLALP (193 aa). Acetyl-CoA contacts are provided by residues 189–191, 197–202, 228–230, and Y235; these read VCV, RNGVGY, and NEA. Y235 (proton donor) is an active-site residue.

It belongs to the acetyltransferase family. GNAT subfamily. As to quaternary structure, oligomer. Post-translationally, autoacetylated. Expressed in green tissues.

It localises to the plastid. The protein resides in the chloroplast. It carries out the reaction an N-terminal L-alpha-aminoacyl-[protein] + acetyl-CoA = N-terminal N(alpha)-acetyl-L-alpha-aminoacyl-[protein] + CoA + H(+). The catalysed reaction is L-lysyl-[protein] + acetyl-CoA = N(6)-acetyl-L-lysyl-[protein] + CoA + H(+). It catalyses the reaction N-terminal L-alanyl-[protein] + acetyl-CoA = N-terminal N(alpha)-acetyl-L-alanyl-[protein] + CoA + H(+). The enzyme catalyses N-terminal L-seryl-[protein] + acetyl-CoA = N-terminal N(alpha)-acetyl-L-seryl-[protein] + CoA + H(+). It carries out the reaction N-terminal L-threonyl-[protein] + acetyl-CoA = N-terminal N(alpha)-acetyl-L-threonyl-[protein] + CoA + H(+). The catalysed reaction is N-terminal L-methionyl-[protein] + acetyl-CoA = N-terminal N(alpha)-acetyl-L-methionyl-[protein] + CoA + H(+). It catalyses the reaction N-terminal L-prolyl-[protein] + acetyl-CoA = N-terminal N(alpha)-acetyl-L-prolyl-[protein] + CoA + H(+). The enzyme catalyses N-terminal L-valyl-[protein] + acetyl-CoA = N-terminal N(alpha)-acetyl-L-valyl-[protein] + CoA + H(+). In terms of biological role, protein acetyltransferase with dual specificity triggering both N-alpha-acetylation (NTA), with a large spectrum of modified N-termini, including methionine, alanine, serine, threonine and to a lower extent valine and proline as substrates, and epsilon-lysine acetylation (KA). This Arabidopsis thaliana (Mouse-ear cress) protein is GCN5-related N-acetyltransferase 7, chloroplastic.